A 314-amino-acid chain; its full sequence is DNA-directed RNA polymerase subunit alpha (314 aa).

Residues 1–228 (MIEIEKPRIE…EHLNIFVGLT (228 aa)) form an alpha N-terminal domain (alpha-NTD) region. Residues 246–314 (EKVLEMSIEE…DLGLGLRKED (69 aa)) are alpha C-terminal domain (alpha-CTD).

This sequence belongs to the RNA polymerase alpha chain family. In terms of assembly, homodimer. The RNAP catalytic core consists of 2 alpha, 1 beta, 1 beta' and 1 omega subunit. When a sigma factor is associated with the core the holoenzyme is formed, which can initiate transcription.

It carries out the reaction RNA(n) + a ribonucleoside 5'-triphosphate = RNA(n+1) + diphosphate. Functionally, DNA-dependent RNA polymerase catalyzes the transcription of DNA into RNA using the four ribonucleoside triphosphates as substrates. The protein is DNA-directed RNA polymerase subunit alpha of Staphylococcus aureus (strain Mu3 / ATCC 700698).